A 440-amino-acid polypeptide reads, in one-letter code: 3-phosphoshikimate 1-carboxyvinyltransferase (440 aa).

The 3-phosphoshikimate site is built by K31, S32, and R36. K31 contributes to the phosphoenolpyruvate binding site. The phosphoenolpyruvate site is built by G104 and R133. Positions 178, 180, 328, and 355 each coordinate 3-phosphoshikimate. Position 180 (Q180) interacts with phosphoenolpyruvate. D328 functions as the Proton acceptor in the catalytic mechanism. Phosphoenolpyruvate-binding residues include R359 and R401.

The protein belongs to the EPSP synthase family. As to quaternary structure, monomer.

Its subcellular location is the cytoplasm. It carries out the reaction 3-phosphoshikimate + phosphoenolpyruvate = 5-O-(1-carboxyvinyl)-3-phosphoshikimate + phosphate. It participates in metabolic intermediate biosynthesis; chorismate biosynthesis; chorismate from D-erythrose 4-phosphate and phosphoenolpyruvate: step 6/7. Functionally, catalyzes the transfer of the enolpyruvyl moiety of phosphoenolpyruvate (PEP) to the 5-hydroxyl of shikimate-3-phosphate (S3P) to produce enolpyruvyl shikimate-3-phosphate and inorganic phosphate. The protein is 3-phosphoshikimate 1-carboxyvinyltransferase of Thermosynechococcus vestitus (strain NIES-2133 / IAM M-273 / BP-1).